Here is a 140-residue protein sequence, read N- to C-terminus: Seminal plasma protein A3 (140 aa).

Residues Met1–Gly25 form the signal peptide. 2 consecutive Fibronectin type-II domains span residues Thr49–Lys93 and Asn94–Cys140. 4 cysteine pairs are disulfide-bonded: Cys54–Cys78, Cys68–Cys91, Cys99–Cys125, and Cys113–Cys140.

It belongs to the seminal plasma protein family.

It localises to the secreted. Its function is as follows. The BSP-A proteins from seminal plasma exhibit both simulatory and inhibitory actions on the release of pituitary gonadotropins. The exact function of these proteins is not known. The protein is Seminal plasma protein A3 of Bos taurus (Bovine).